The chain runs to 330 residues: D-lactate dehydrogenase (330 aa).

NAD(+) is bound by residues 156–157 (RI), Asp-176, 206–207 (VP), 233–235 (AAR), and Asp-259. Residue Arg-235 is part of the active site. Glu-264 is an active-site residue. The active-site Proton donor is the His-296.

Belongs to the D-isomer specific 2-hydroxyacid dehydrogenase family.

It carries out the reaction (R)-lactate + NAD(+) = pyruvate + NADH + H(+). The sequence is that of D-lactate dehydrogenase (ldhD) from Staphylococcus aureus.